Consider the following 292-residue polypeptide: 5,10-methylenetetrahydrofolate reductase (292 aa).

Glu-26 serves as the catalytic Proton donor/acceptor. Thr-57 contacts NADH. Residues Tyr-58, Ala-60, His-86, Arg-116, Gly-117, Asp-118, Ala-130, Tyr-150, His-154, Ala-157, Asp-163, Asn-166, Arg-169, and Lys-170 each coordinate FAD. Asp-118 contributes to the (6S)-5-methyl-5,6,7,8-tetrahydrofolate binding site. Gln-181 lines the NADH pocket. Residues Gln-181, Gln-217, and Arg-277 each contribute to the (6S)-5-methyl-5,6,7,8-tetrahydrofolate site.

Belongs to the methylenetetrahydrofolate reductase family. Requires FAD as cofactor.

It catalyses the reaction (6S)-5-methyl-5,6,7,8-tetrahydrofolate + NAD(+) = (6R)-5,10-methylene-5,6,7,8-tetrahydrofolate + NADH + H(+). The protein operates within one-carbon metabolism; tetrahydrofolate interconversion. Its pathway is amino-acid biosynthesis; L-methionine biosynthesis via de novo pathway. Catalyzes the NADH-dependent reduction of 5,10-methylenetetrahydrofolate to 5-methyltetrahydrofolate. Is required to provide the methyl group necessary for methionine synthetase to convert homocysteine to methionine; the methyl group is given by 5-methyltetrahydrofolate. This chain is 5,10-methylenetetrahydrofolate reductase (metF), found in Haemophilus influenzae (strain ATCC 51907 / DSM 11121 / KW20 / Rd).